The sequence spans 304 residues: Tyrosine recombinase XerC (304 aa).

In terms of domain architecture, Core-binding (CB) spans 6 to 92; that stretch reads NKLYLQAQAY…VLRQWFAYLV (87 aa). Positions 113–292 constitute a Tyr recombinase domain; sequence HLPKNIDAER…DFQHLAKIYD (180 aa). Catalysis depends on residues arginine 152, lysine 176, histidine 244, arginine 247, and histidine 270. Tyrosine 279 functions as the O-(3'-phospho-DNA)-tyrosine intermediate in the catalytic mechanism.

It belongs to the 'phage' integrase family. XerC subfamily. Forms a cyclic heterotetrameric complex composed of two molecules of XerC and two molecules of XerD.

It localises to the cytoplasm. Functionally, site-specific tyrosine recombinase, which acts by catalyzing the cutting and rejoining of the recombining DNA molecules. The XerC-XerD complex is essential to convert dimers of the bacterial chromosome into monomers to permit their segregation at cell division. It also contributes to the segregational stability of plasmids. The protein is Tyrosine recombinase XerC of Haemophilus ducreyi (strain 35000HP / ATCC 700724).